The sequence spans 824 residues: Protein bicaudal D homolog 2 (824 aa).

Position 2 is an N-acetylserine (Ser2). The stretch at 20 to 269 (EWLRAEVKRL…ELSHYMSIND (250 aa)) forms a coiled coil. Residues 25 to 398 (EVKRLSHELA…RLTENLSALR (374 aa)) are interacts with DYNLL1, DYNC1H1, DYNC1I2, DCTN1 and DCTN2. Residues Ser190, Ser224, and Ser318 each carry the phosphoserine modification. The tract at residues 311–330 (LPLDNKTSTPKKEGLAPPSP) is disordered. Phosphothreonine is present on Thr319. Residues 334-599 (SDLLSELNIS…LLAPEAGRAD (266 aa)) form an interaction with KIF5A region. Residues 338 to 537 (SELNISEIQK…VTFSEELANL (200 aa)) are a coiled coil. A phosphoserine mark is found at Ser343 and Ser395. 3 disordered regions span residues 398-425 (RRLQASKERQTALDNEKDRDSHEDGDYY), 559-622 (EGQG…DPRR), and 804-824 (EQTRRGRAKAAPKTKPATPSL). Basic and acidic residues predominate over residues 402 to 422 (ASKERQTALDNEKDRDSHEDG). Phosphoserine is present on residues Ser568, Ser574, and Ser582. The interaction with RANBP2 stretch occupies residues 590 to 824 (LLAPEAGRAD…PKTKPATPSL (235 aa)). Thr602 is subject to Phosphothreonine. Residues 604 to 618 (DSSPSPGSSLPSPLS) are compositionally biased toward low complexity. The stretch at 666 to 808 (DKDKEALMEE…LELDHEQTRR (143 aa)) forms a coiled coil. Residues 666–814 (DKDKEALMEE…QTRRGRAKAA (149 aa)) are interacts with RAB6A. At Thr821 the chain carries Phosphothreonine. Residue Ser823 is modified to Phosphoserine.

It belongs to the BicD family. As to quaternary structure, part of a tripartite complex with dynein and dynactin, acts an adapter linking the dynein motor complex and dynactin. Interacts with CPNE4 (via VWFA domain). Interacts with RAB6A. Interacts with NEK9. Interacts with DNAI1. Interacts with DYNC1H1. Interacts with RANBP2. Binds preferentially to tyrosinated microtubules than to detyrosinated microtubules. Interacts with DYNLL1, DYNC1I2; DCTN1, DCTN2 and KIF5A. Interacts with KIF1C. Phosphorylated by NEK9 in vitro. Ubiquitous.

Its subcellular location is the golgi apparatus. The protein resides in the cytoplasm. The protein localises to the cytoskeleton. It is found in the nucleus envelope. It localises to the nucleus. Its subcellular location is the nuclear pore complex. Functionally, acts as an adapter protein linking the dynein motor complex to various cargos and converts dynein from a non-processive to a highly processive motor in the presence of dynactin. Facilitates and stabilizes the interaction between dynein and dynactin and activates dynein processivity (the ability to move along a microtubule for a long distance without falling off the track). Facilitates the binding of RAB6A to the Golgi by stabilizing its GTP-bound form. Regulates coat complex coatomer protein I (COPI)-independent Golgi-endoplasmic reticulum transport via its interaction with RAB6A and recruitment of the dynein-dynactin motor complex. Contributes to nuclear and centrosomal positioning prior to mitotic entry through regulation of both dynein and kinesin-1. During G2 phase of the cell cycle, associates with RANBP2 at the nuclear pores and recruits dynein and dynactin to the nuclear envelope to ensure proper positioning of the nucleus relative to centrosomes prior to the onset of mitosis. The protein is Protein bicaudal D homolog 2 of Homo sapiens (Human).